The primary structure comprises 546 residues: Src substrate cortactin (546 aa).

A disordered region spans residues 1–28 (MWKASAGHAVSITQDDGGADDWETDPDF). The segment covering 17–28 (GGADDWETDPDF) has biased composition (acidic residues). Cortactin repeat units follow at residues 80–116 (ASHG…SQVD), 117–153 (SVRG…SQKD), 154–190 (YSSG…SQKD), 191–227 (YSKG…SQKD), 228–264 (YVKG…SQKD), and 265–301 (YKTG…SQQD). N6-acetyllysine is present on residues lysine 87 and lysine 107. At serine 113 the chain carries Phosphoserine. Arginine 119 is modified (omega-N-methylarginine). Lysine 124 is subject to N6-acetyllysine. Position 144 is an N6-acetyllysine; alternate (lysine 144). A Glycyl lysine isopeptide (Lys-Gly) (interchain with G-Cter in SUMO1); alternate cross-link involves residue lysine 144. Residue lysine 144 forms a Glycyl lysine isopeptide (Lys-Gly) (interchain with G-Cter in SUMO2); alternate linkage. Serine 150 is modified (phosphoserine). Lysine 152, lysine 161, and lysine 171 each carry N6-acetyllysine. N6-acetyllysine; alternate is present on lysine 181. A Glycyl lysine isopeptide (Lys-Gly) (interchain with G-Cter in SUMO1); alternate cross-link involves residue lysine 181. Lysine 181 is covalently cross-linked (Glycyl lysine isopeptide (Lys-Gly) (interchain with G-Cter in SUMO2); alternate). Lysine 193 and lysine 198 each carry N6-acetyllysine. A Glycyl lysine isopeptide (Lys-Gly) (interchain with G-Cter in SUMO1) cross-link involves residue lysine 218. Lysine 235 bears the N6-acetyllysine mark. At serine 261 the chain carries Phosphoserine. At lysine 272 the chain carries N6-acetyllysine. The residue at position 295 (lysine 295) is an N6-acetyllysine; alternate. Lysine 295 is covalently cross-linked (Glycyl lysine isopeptide (Lys-Gly) (interchain with G-Cter in SUMO2); alternate). One copy of the Cortactin 7; truncated repeat lies at 302–324 (YAKGFGGKYGVQKDRMDKNASTF). N6-acetyllysine is present on residues lysine 304, lysine 309, lysine 314, and lysine 346. Positions 348 to 401 (SNIRANFENLAKEREQEDRRKAEAERAQRMAKERQEQEEARRKLEEQARAKKQT) form a coiled coil. The disordered stretch occupies residues 355 to 424 (ENLAKEREQE…PPSSPIYEDA (70 aa)). Over residues 357–396 (LAKEREQEDRRKAEAERAQRMAKERQEQEEARRKLEEQAR) the composition is skewed to basic and acidic residues. Position 401 is a phosphothreonine (threonine 401). Phosphoserine occurs at positions 405, 407, 417, and 418. A phosphotyrosine mark is found at tyrosine 421 and tyrosine 442. Serine 443 is subject to Phosphoserine. Tyrosine 466 carries the phosphotyrosine; by FAK1 modification. 2 positions are modified to phosphotyrosine; by SRC: tyrosine 482 and tyrosine 485. One can recognise an SH3 domain in the interval 488–546 (DLGITAIALYDYQAAGDDEISFDPDDIITNIEMIDDGWWRGVCKGRYGLFPANYVELRQ).

In terms of assembly, part of a complex composed of NEDD9, AURKA and CTTN; within the complex NEDD9 acts as a scaffold protein and is required for complex formation. Interacts (via N-terminus) with NEDD9. Identified in a complex containing FGFR4, NCAM1, CDH2, PLCG1, FRS2, SRC, SHC1, GAP43 and CTTN. Forms a complex with ABL1 and MYLK. Interacts with SHANK2 and SHANK3 (via its SH3 domain). Interacts with PLXDC2 and SRCIN1. Interacts with SAMSN1 (via SH3 domain). Interacts (via SH3 domain) with ASAP1 (via Pro-rich region). Interacts (via SH3 domain) with DNM2. Interacts with ACTN1. Interacts with FER. Interacts with KCNA2 (via non-phosphorylated C-terminus). Interacts with FGD1. Interacts with ABL2. Interacts with CTTNBP2NL; this interaction may target CTTN to stress fibers. Interacts with CTTNBP2; this interaction may target CTTN at the cell cortex or dendritic spines. Interacts with KCNH1. Interacts (via SH3 domain) with DIP2A (via N-terminus); the interaction enhances CTTN acetylation and is required for proper synaptic transmission. Interacts with XIRP1 (via N-terminus); the interaction promotes CTTN localization to intercalated disks in cardiomyocytes. In terms of processing, acetylated. Post-translationally, phosphorylated by FER. Phosphorylated in response to FGR activation. Phosphorylation by SRC promotes MYLK binding. Phosphorylated on tyrosine residues in response to CHRM1 activation. Phosphorylated by PTK2/FAK1 in response to cell adhesion. Tyrosine phosphorylation in transformed cells may contribute to cellular growth regulation and transformation. Phosphorylated by PKN2 at both serine and threonine residues in a GTP-bound Rac1-dependent manner in hyaluronan-induced astrocytes and hence down-regulated CTTN ability to associate with filamentous actin. Expressed at intercalated disks in the heart (at protein level). Expressed in most tissues, except in B-lymphocytes or plasma cells.

It localises to the cytoplasm. It is found in the cytoskeleton. Its subcellular location is the cell projection. The protein localises to the lamellipodium. The protein resides in the ruffle. It localises to the dendrite. It is found in the cell membrane. Its subcellular location is the podosome. The protein localises to the cell junction. The protein resides in the focal adhesion. It localises to the membrane. It is found in the clathrin-coated pit. Its subcellular location is the dendritic spine. The protein localises to the cell cortex. The protein resides in the endoplasmic reticulum. In terms of biological role, contributes to the organization of the actin cytoskeleton and cell shape. Plays a role in the formation of lamellipodia and in cell migration. Plays a role in the regulation of neuron morphology, axon growth and formation of neuronal growth cones. Through its interaction with CTTNBP2, involved in the regulation of neuronal spine density. Plays a role in focal adhesion assembly and turnover. In complex with ABL1 and MYLK regulates cortical actin-based cytoskeletal rearrangement critical to sphingosine 1-phosphate (S1P)-mediated endothelial cell (EC) barrier enhancement. Plays a role in intracellular protein transport and endocytosis, and in modulating the levels of potassium channels present at the cell membrane. Plays a role in receptor-mediated endocytosis via clathrin-coated pits. Required for stabilization of KCNH1 channels at the cell membrane. The sequence is that of Src substrate cortactin (Cttn) from Mus musculus (Mouse).